The sequence spans 145 residues: Large ribosomal subunit protein uL13 (145 aa).

It belongs to the universal ribosomal protein uL13 family. As to quaternary structure, part of the 50S ribosomal subunit.

This protein is one of the early assembly proteins of the 50S ribosomal subunit, although it is not seen to bind rRNA by itself. It is important during the early stages of 50S assembly. This is Large ribosomal subunit protein uL13 from Brevibacillus brevis (strain 47 / JCM 6285 / NBRC 100599).